The sequence spans 318 residues: Methionyl-tRNA formyltransferase (318 aa).

112-115 serves as a coordination point for (6S)-5,6,7,8-tetrahydrofolate; the sequence is SILP.

This sequence belongs to the Fmt family.

It carries out the reaction L-methionyl-tRNA(fMet) + (6R)-10-formyltetrahydrofolate = N-formyl-L-methionyl-tRNA(fMet) + (6S)-5,6,7,8-tetrahydrofolate + H(+). Attaches a formyl group to the free amino group of methionyl-tRNA(fMet). The formyl group appears to play a dual role in the initiator identity of N-formylmethionyl-tRNA by promoting its recognition by IF2 and preventing the misappropriation of this tRNA by the elongation apparatus. The chain is Methionyl-tRNA formyltransferase from Shewanella putrefaciens (strain CN-32 / ATCC BAA-453).